Reading from the N-terminus, the 178-residue chain is Translation initiation factor IF-3 (178 aa).

The segment at 1-20 (MRRPFKAAAPTKDGPRSNRD) is disordered.

The protein belongs to the IF-3 family. As to quaternary structure, monomer.

The protein localises to the cytoplasm. In terms of biological role, IF-3 binds to the 30S ribosomal subunit and shifts the equilibrium between 70S ribosomes and their 50S and 30S subunits in favor of the free subunits, thus enhancing the availability of 30S subunits on which protein synthesis initiation begins. The sequence is that of Translation initiation factor IF-3 from Mesorhizobium japonicum (strain LMG 29417 / CECT 9101 / MAFF 303099) (Mesorhizobium loti (strain MAFF 303099)).